Consider the following 363-residue polypeptide: Glycerol-3-phosphate dehydrogenase [NAD(+)], cytoplasmic (363 aa).

NAD(+) contacts are provided by residues 11 to 16, F98, K121, and A155; that span reads GSGNWG. K121 contacts substrate. Catalysis depends on K206, which acts as the Proton acceptor. NAD(+) contacts are provided by R270 and Q299. 270-271 serves as a coordination point for substrate; the sequence is RN.

The protein belongs to the NAD-dependent glycerol-3-phosphate dehydrogenase family. In terms of assembly, homodimer. In terms of tissue distribution, isoform GPDH-1 is predominant in thorax and isoform GPDH-3 in abdomen.

The protein localises to the cytoplasm. It catalyses the reaction sn-glycerol 3-phosphate + NAD(+) = dihydroxyacetone phosphate + NADH + H(+). It participates in phospholipid metabolism; alpha-glycerophosphate cycle. The protein is Glycerol-3-phosphate dehydrogenase [NAD(+)], cytoplasmic of Drosophila melanogaster (Fruit fly).